A 516-amino-acid chain; its full sequence is Lipid II flippase MurJ (516 aa).

11 helical membrane passes run 93–113 (WALA…VFAV), 133–153 (IMFP…VLNT), 159–179 (LPAF…VFVA), 188–208 (ALAW…LPGL), 233–253 (VLAK…SLII), 275–295 (LMEF…LPSL), 317–337 (VTFL…TPLT), 358–378 (LATY…APGF), 390–409 (IAIG…VPLI), 448–468 (FFVQ…WCAI), and 483–503 (IALM…MLWV).

Belongs to the MurJ/MviN family.

It localises to the cell inner membrane. Its pathway is cell wall biogenesis; peptidoglycan biosynthesis. Involved in peptidoglycan biosynthesis. Transports lipid-linked peptidoglycan precursors from the inner to the outer leaflet of the cytoplasmic membrane. This chain is Lipid II flippase MurJ, found in Burkholderia cenocepacia (strain ATCC BAA-245 / DSM 16553 / LMG 16656 / NCTC 13227 / J2315 / CF5610) (Burkholderia cepacia (strain J2315)).